Here is a 181-residue protein sequence, read N- to C-terminus: ATP-dependent protease subunit ClpQ (181 aa).

Ser-2 is an active-site residue. Residues Gly-165, Cys-168, and Thr-171 each coordinate Na(+).

A double ring-shaped homohexamer of ClpQ is capped on each side by a ring-shaped ClpY homohexamer. The assembly of the ClpQ/ClpY complex is dependent on binding of ATP.

It localises to the cytoplasm. Protease subunit of a proteasome-like degradation complex. The sequence is that of ATP-dependent protease subunit ClpQ (clpQ) from Bacillus subtilis (strain 168).